The chain runs to 184 residues: ATP synthase subunit delta (184 aa).

Belongs to the ATPase delta chain family. In terms of assembly, F-type ATPases have 2 components, F(1) - the catalytic core - and F(0) - the membrane proton channel. F(1) has five subunits: alpha(3), beta(3), gamma(1), delta(1), epsilon(1). F(0) has three main subunits: a(1), b(2) and c(10-14). The alpha and beta chains form an alternating ring which encloses part of the gamma chain. F(1) is attached to F(0) by a central stalk formed by the gamma and epsilon chains, while a peripheral stalk is formed by the delta and b chains.

It is found in the cell membrane. Functionally, f(1)F(0) ATP synthase produces ATP from ADP in the presence of a proton or sodium gradient. F-type ATPases consist of two structural domains, F(1) containing the extramembraneous catalytic core and F(0) containing the membrane proton channel, linked together by a central stalk and a peripheral stalk. During catalysis, ATP synthesis in the catalytic domain of F(1) is coupled via a rotary mechanism of the central stalk subunits to proton translocation. In terms of biological role, this protein is part of the stalk that links CF(0) to CF(1). It either transmits conformational changes from CF(0) to CF(1) or is implicated in proton conduction. The sequence is that of ATP synthase subunit delta from Rickettsia africae (strain ESF-5).